An 836-amino-acid polypeptide reads, in one-letter code: Translation initiation factor IF-2 (836 aa).

Over residues 1-17 (MLRLMRQKKLSIQRRTK) the composition is skewed to basic residues. 2 disordered regions span residues 1–43 (MLRL…RTVK) and 83–240 (AAKK…KGAA). Residues 18 to 27 (TTVSSTTTGG) show a composition bias toward low complexity. Over residues 83-153 (AAKKEADEKV…AAEEAKRYAE (71 aa)) the composition is skewed to basic and acidic residues. Positions 154–167 (ADDSDNESSSEDYS) are enriched in acidic residues. Residues 192–202 (RGKNKVAKAKK) are compositionally biased toward basic residues. The segment covering 203-229 (GGRDDENSKNSKNERESNRKNQKDAKF) has biased composition (basic and acidic residues). Residues 335 to 505 (TRAPVVTIMG…LLQSEVLELT (171 aa)) form the tr-type G domain. Residues 344–351 (GHVDHGKT) form a G1 region. Residue 344–351 (GHVDHGKT) coordinates GTP. The G2 stretch occupies residues 369–373 (GITQH). The G3 stretch occupies residues 391–394 (DTPG). GTP contacts are provided by residues 391–395 (DTPGH) and 445–448 (NKID). The tract at residues 445–448 (NKID) is G4. The segment at 481 to 483 (SAK) is G5.

The protein belongs to the TRAFAC class translation factor GTPase superfamily. Classic translation factor GTPase family. IF-2 subfamily.

The protein localises to the cytoplasm. In terms of biological role, one of the essential components for the initiation of protein synthesis. Protects formylmethionyl-tRNA from spontaneous hydrolysis and promotes its binding to the 30S ribosomal subunits. Also involved in the hydrolysis of GTP during the formation of the 70S ribosomal complex. The protein is Translation initiation factor IF-2 of Haemophilus influenzae (strain PittEE).